Reading from the N-terminus, the 5538-residue chain is Leashin (5538 aa).

The span at 1-10 (MFRALMGGGR) shows a compositional bias: gly residues. 22 disordered regions span residues 1–270 (MFRA…SSMG), 286–315 (EVDPAPGRPDRPTAGTTSEPPKPSNTTFGI), 331–365 (LPLPASPTSPPEPVPTTAPYAPPVTSSTTKPPHTH), 510–555 (SRDA…KKSS), 596–712 (TESV…DISQ), 800–901 (AATS…FPTG), 913–944 (ALASTQDRDSRLPRQHASSSSGSLQHVAPVPT), 1027–1145 (NRPH…KDSF), 1164–1297 (VLSG…GYRD), 1310–1398 (PTPP…RYVS), 1432–1993 (EDPT…TSVE), 2067–2146 (SELL…VNAF), 2165–2207 (NRLS…SPPA), 2233–3065 (PEAA…SQPI), 3077–3894 (MAEE…EIVS), 3910–4034 (EEKA…DTGL), 4072–4128 (KFKQ…EEPL), 4238–4421 (EAAL…SNQA), 4442–4463 (PRPLEVEPAASEVYQGATDEND), 4509–4698 (LRRQ…TSNT), 4733–4850 (KTDG…VEQA), and 4910–5052 (ALTV…RHRR). The woronin bodies-binding region stretch occupies residues 1 to 1100 (MFRALMGGGR…RASGVQLIDR (1100 aa)). Positions 14-23 (SRSTTSSSKS) are enriched in low complexity. Composition is skewed to basic and acidic residues over residues 42–51 (SRGDDRDRGL) and 89–167 (VEHD…ERSR). Residues 299 to 313 (AGTTSEPPKPSNTTF) are compositionally biased toward polar residues. The segment covering 334–352 (PASPTSPPEPVPTTAPYAP) has biased composition (pro residues). Over residues 514–523 (PRKHHYRQRR) the composition is skewed to basic residues. Residues 598 to 607 (SVSTARRSQT) are compositionally biased toward polar residues. Residues 639-655 (HRSRSRSHSSSRNRRHS) show a composition bias toward basic residues. The segment covering 660–674 (AAVGAAVGSGAIALA) has biased composition (low complexity). The segment covering 682–698 (SRSRSRSRFPRKSKGRK) has biased composition (basic residues). Residues 809–825 (RAGEILVAKETRSRHSD) are compositionally biased toward basic and acidic residues. Low complexity-rich tracts occupy residues 842–851 (GDQSSSSVSS) and 862–880 (GSDESQSSDSGTSKWGWRW). Positions 881 to 891 (GSKKNKKKKRA) are enriched in basic residues. Basic and acidic residues-rich tracts occupy residues 1068–1091 (LTKEQADKERRMDRLEQLKRDAER), 1098–1145 (IDRD…KDSF), 1178–1198 (SQRRHEERRQQRRAERRRGSE), 1207–1226 (SKSERAQETTDYLPEERQPE), 1356–1365 (WGEHKTHEYE), 1375–1387 (SVDHETTREREQP), 1447–1462 (GRVEYRDPWVETESKS), and 1478–1488 (EEKAPSSRVIE). Residues 1506–1516 (QESSEPQTRTS) are compositionally biased toward low complexity. 3 stretches are compositionally biased toward basic and acidic residues: residues 1521-1536 (VIDRLSEKQDERDGSR), 1549-1559 (GKERDESELRA), and 1572-1594 (EELRSDPKRDVDSRDDGDVDRRS). Positions 1639–1648 (KKKRRKRRSK) are enriched in basic residues. Basic and acidic residues-rich tracts occupy residues 1672–1686 (EKLKSMDDKDKEKKA), 1700–1773 (EPVD…QRRE), and 1788–1800 (KSGEYEKDRKLSE). 2 stretches are compositionally biased toward low complexity: residues 1867 to 1876 (PAPRSRSRPA) and 1889 to 1898 (SQSSRRSSIL). The segment covering 1950-1975 (KNSREMRPLWLVERHGPGHGEHKLEE) has biased composition (basic and acidic residues). Composition is skewed to polar residues over residues 1984-1993 (KTSSANTSVE) and 2121-2130 (TPQNNVTAAS). Basic and acidic residues-rich tracts occupy residues 2187–2196 (DADRTHKPIA), 2269–2279 (VPRDDKRRDSV), and 2307–2320 (GENKELPSEAKNEN). A compositionally biased stretch (polar residues) spans 2321–2331 (ANDNSQAQTEQ). Over residues 2344 to 2355 (AKKKKKKNKKKR) the composition is skewed to basic residues. Positions 2358–2370 (MDSNTQEPTTPVD) are enriched in polar residues. Residues 2427–2441 (DVEKAIEAPDVRKEL) are compositionally biased toward basic and acidic residues. Residues 2449-2461 (APEDTPAEPTAET) show a composition bias toward low complexity. Residues 2473–2484 (KKSKKKKKKKNK) are compositionally biased toward basic residues. Positions 2494 to 2525 (DPASTETPEASAANSQVVAAEQVESTLETTQP) are enriched in polar residues. Basic and acidic residues-rich tracts occupy residues 2580–2590 (NQAKELPHPEE), 2647–2661 (PEDKNGEAEQADLKS), and 2677–2691 (ALDKELSEISERPAE). Residues 2719 to 2734 (EEPTPTAAELETPLSR) show a composition bias toward low complexity. Basic residues predominate over residues 2735 to 2747 (KNSKKNKKKNKRK). The span at 2796–2812 (DENKGESRDVQAVKEET) shows a compositional bias: basic and acidic residues. Positions 2874–2884 (KKKAKKKKNRK) are enriched in basic residues. Positions 2885–2894 (TANVSESQPE) are enriched in polar residues. Basic residues-rich tracts occupy residues 3003 to 3013 (KKSKKNKKKKQ) and 3089 to 3100 (KKTKKEKKKKRQ). Residues 3145 to 3172 (AIEHAEAAAEHSQEQPNKDVTLHADHSP) are compositionally biased toward basic and acidic residues. The segment covering 3248 to 3268 (PAMEGGAAAEELVAVEPDVLE) has biased composition (low complexity). Positions 3293 to 3303 (ELVNAETTQKT) are enriched in polar residues. Over residues 3329-3341 (SKKKDKKKKKKRQ) the composition is skewed to basic residues. Positions 3347-3367 (DEQRSSTKEEPTAEFSSDHVP) are enriched in basic and acidic residues. Low complexity-rich tracts occupy residues 3397–3409 (TQTAAEPTPSSAS) and 3422–3435 (ESTQEPAAEEAQTA). A compositionally biased stretch (basic residues) spans 3436 to 3450 (KSKKKAKKDKKKRKS). Over residues 3480–3495 (EGPKPGDKPTSPKDSS) the composition is skewed to basic and acidic residues. Residues 3547 to 3564 (EEQAVVEETVAPPVVDEA) show a composition bias toward low complexity. Composition is skewed to polar residues over residues 3565–3580 (SQLQEQKVSSETLWSE) and 3604–3613 (VSPSLENNEG). Basic residues-rich tracts occupy residues 3642-3652 (KSKKNKKKKKR) and 3716-3730 (KAKKKAKKKDKKRQS). Residues 3768-3787 (TFSQETSETISTEAKSSEPS) show a composition bias toward polar residues. Over residues 3800-3819 (KENQSHDTEPHGGNDKDLTW) the composition is skewed to basic and acidic residues. Positions 3823–3837 (MVSSQVEQQQGTPSD) are enriched in polar residues. A compositionally biased stretch (basic and acidic residues) spans 3876–3893 (DRLERSGEEGTRVKKEIV). 2 stretches are compositionally biased toward polar residues: residues 3915–3925 (ISSQGEDTIQV) and 3965–3980 (KDQFTSIEVNDPSQSK). Over residues 4010-4020 (TSQDDSVDAVQ) the composition is skewed to acidic residues. Residues 4111–4123 (ESRENKFKEKQLA) are compositionally biased toward basic and acidic residues. Over residues 4244 to 4255 (KNSKKKSKKAKK) the composition is skewed to basic residues. A compositionally biased stretch (polar residues) spans 4328–4345 (LGQTPNMDNQTDDVQSTE). A compositionally biased stretch (basic residues) spans 4378–4391 (KLSKKDRRKAKKKS). Over residues 4392–4406 (AKDAIEPSDEPELRN) the composition is skewed to basic and acidic residues. Residues 4495-5538 (AIAEFDETAI…SSTMDISNVI (1044 aa)) form a septal pore-binding region region. Residues 4554 to 4570 (TEQSAGLQAKSVSSQGA) are compositionally biased toward polar residues. 2 stretches are compositionally biased toward basic and acidic residues: residues 4574–4591 (IQDDMQHPENRLARDQTK) and 4660–4673 (EESHLQSQQDEKGP). Residues 4940-4954 (SSVSSVKSVQSTHSV) are compositionally biased toward low complexity. The segment covering 4966–4988 (RNTSGDLRAASQAQESHGTQPHA) has biased composition (polar residues). Positions 4989–4998 (TPQPPQPPPS) are enriched in pro residues. Residues 5050 to 5223 (HRRSMQHLQE…QQQIAASLHD (174 aa)) are a coiled coil.

In terms of assembly, binds directly or indirectly to the Woronin body major protein hexA.

It localises to the cell septum. Its function is as follows. Acts as the tether and is essential for anchoring of Woronin bodies at the septal pore. In damaged hyphae, Woronin bodies occlude septal pores in order to separate intact from damaged compartments. This Aspergillus fumigatus (strain ATCC MYA-4609 / CBS 101355 / FGSC A1100 / Af293) (Neosartorya fumigata) protein is Leashin.